We begin with the raw amino-acid sequence, 180 residues long: MRKMIAVLRLGHRPERDKRITTHVALTARAFGADKIIIAAEEDEHVKESVEDVVNRWGGPFEIEFNPSWKKILREWKDRGIIVHLTMYGIHIDDAIPRIKDELKSGKDLLIVVGAEKVPREVYEMADYNVAVGNQPHSEVAALAVFLDRLLDGAGLRKEFHNAKLKIVPQERGKKVLQLE.

Residues L85, G114–V118, and V132–E139 contribute to the S-adenosyl-L-methionine site.

It belongs to the aTrm56 family. Homodimer.

Its subcellular location is the cytoplasm. The enzyme catalyses cytidine(56) in tRNA + S-adenosyl-L-methionine = 2'-O-methylcytidine(56) in tRNA + S-adenosyl-L-homocysteine + H(+). Specifically catalyzes the AdoMet-dependent 2'-O-ribose methylation of cytidine at position 56 in tRNAs. The protein is tRNA (cytidine(56)-2'-O)-methyltransferase of Thermococcus kodakarensis (strain ATCC BAA-918 / JCM 12380 / KOD1) (Pyrococcus kodakaraensis (strain KOD1)).